A 328-amino-acid polypeptide reads, in one-letter code: GTP 3',8-cyclase (328 aa).

The region spanning 1–229 is the Radical SAM core domain; the sequence is MNQVDYLRIS…DAQVRGAGPA (229 aa). A GTP-binding site is contributed by R8. 2 residues coordinate [4Fe-4S] cluster: C15 and C19. Y21 lines the S-adenosyl-L-methionine pocket. Residue C22 coordinates [4Fe-4S] cluster. Position 60 (R60) interacts with GTP. G64 is a binding site for S-adenosyl-L-methionine. T91 serves as a coordination point for GTP. Position 115 (S115) interacts with S-adenosyl-L-methionine. K155 serves as a coordination point for GTP. S-adenosyl-L-methionine is bound at residue M189. The [4Fe-4S] cluster site is built by C252 and C255. Residue 257-259 participates in GTP binding; the sequence is RMR. C269 serves as a coordination point for [4Fe-4S] cluster.

Belongs to the radical SAM superfamily. MoaA family. As to quaternary structure, monomer and homodimer. It depends on [4Fe-4S] cluster as a cofactor.

The enzyme catalyses GTP + AH2 + S-adenosyl-L-methionine = (8S)-3',8-cyclo-7,8-dihydroguanosine 5'-triphosphate + 5'-deoxyadenosine + L-methionine + A + H(+). It participates in cofactor biosynthesis; molybdopterin biosynthesis. Functionally, catalyzes the cyclization of GTP to (8S)-3',8-cyclo-7,8-dihydroguanosine 5'-triphosphate. The chain is GTP 3',8-cyclase from Nostoc sp. (strain PCC 7120 / SAG 25.82 / UTEX 2576).